A 477-amino-acid chain; its full sequence is Bifunctional protein HldE (477 aa).

Positions 1-318 (MKVTLPEFER…ENAVRGRADT (318 aa)) are ribokinase. Residue K179 is modified to N6-acetyllysine. 195 to 198 (NLSE) lines the ATP pocket. Residue D264 is part of the active site. Residues 344–477 (MTNGVFDILH…IKKIQQDKKG (134 aa)) are cytidylyltransferase.

The protein in the N-terminal section; belongs to the carbohydrate kinase PfkB family. It in the C-terminal section; belongs to the cytidylyltransferase family. Homodimer.

The catalysed reaction is D-glycero-beta-D-manno-heptose 7-phosphate + ATP = D-glycero-beta-D-manno-heptose 1,7-bisphosphate + ADP + H(+). It carries out the reaction D-glycero-beta-D-manno-heptose 1-phosphate + ATP + H(+) = ADP-D-glycero-beta-D-manno-heptose + diphosphate. It functions in the pathway nucleotide-sugar biosynthesis; ADP-L-glycero-beta-D-manno-heptose biosynthesis; ADP-L-glycero-beta-D-manno-heptose from D-glycero-beta-D-manno-heptose 7-phosphate: step 1/4. It participates in nucleotide-sugar biosynthesis; ADP-L-glycero-beta-D-manno-heptose biosynthesis; ADP-L-glycero-beta-D-manno-heptose from D-glycero-beta-D-manno-heptose 7-phosphate: step 3/4. Functionally, catalyzes the phosphorylation of D-glycero-D-manno-heptose 7-phosphate at the C-1 position to selectively form D-glycero-beta-D-manno-heptose-1,7-bisphosphate. Its function is as follows. Catalyzes the ADP transfer from ATP to D-glycero-beta-D-manno-heptose 1-phosphate, yielding ADP-D-glycero-beta-D-manno-heptose. In Escherichia coli (strain 55989 / EAEC), this protein is Bifunctional protein HldE.